The sequence spans 445 residues: uncharacterized protein (445 aa).

Transmembrane regions (helical) follow at residues 16–36 (IVSLGVTASSFLFINGVAFLI), 52–72 (LLASMPSWGLVVTMFAWGYLL), 98–118 (VHSLLWIGVFLFLGGMAAGGC), 168–188 (GLMFPAVVCTLAAVASVLGIV), 219–239 (ASALLMMPQTVTVTFMLVWLI), 243–263 (GWSVAQAGVLVTISQLLGALG), 283–303 (LIAAAAAATLFLLAAVDNEGS), and 366–386 (AAYPTAWALCGVFPLAAVPLV). Residues 417 to 445 (AWPNGPRRPGPPGQPRRVRQGGTAITPPT) form a disordered region.

Belongs to the major facilitator superfamily.

It localises to the cell membrane. This is an uncharacterized protein from Mycobacterium tuberculosis (strain CDC 1551 / Oshkosh).